The following is a 204-amino-acid chain: MKFLAILSLSSSALATISSIQLFAKSDDSKVDGLGLYSKHEGAAIDYLFLGKNGADLKYDDEKKQIFQELKTSSITVRQSFTLGGDVYELGATDNFIPVTINKDGTLSFTGDDKVYASKNVNDPYRYSESEYAVSNKKTDDSAPITIVAKFSDDKAAETSGVAQAASSSAGPAQASVSNFEGAAGQNKLSYGVGMAAVVAGLVM.

Positions 1–15 are cleaved as a signal peptide; it reads MKFLAILSLSSSALA. A lipid anchor (GPI-anchor amidated glycine) is attached at Gly182. The propeptide at 183-204 is removed in mature form; it reads AAGQNKLSYGVGMAAVVAGLVM.

It belongs to the SRP1/TIP1 family. Post-translationally, the GPI-anchor is attached to the protein in the endoplasmic reticulum and serves to target the protein to the cell surface. There, the glucosamine-inositol phospholipid moiety is cleaved off and the GPI-modified mannoprotein is covalently attached via its lipidless GPI glycan remnant to the 1,6-beta-glucan of the outer cell wall layer. In terms of processing, O-glycosylated by PMT1.

It is found in the secreted. It localises to the cell wall. Its subcellular location is the membrane. In terms of biological role, component of the cell wall involved in virulence. Does not seem to have a major role in maintaining cell wall integrity but plays a role in the relationship between C.albicans and the host. The chain is Cell wall protein RHD3 (RHD3) from Candida albicans (strain SC5314 / ATCC MYA-2876) (Yeast).